The following is a 71-amino-acid chain: Protein DP71L (71 aa).

2 important for host CHOP inhibition regions span residues 16–18 (VRF) and 57–61 (LSTVL).

The protein belongs to the asfivirus DP71L family. In terms of assembly, interacts (via C-terminus) with host PPP1CB.

Functionally, interacts with the host phosphatase PP1 catalytic subunit (PPP1CB) and recruits it to dephosphorylate EIF2S1/eIF2alpha and therefore restores the host translation that has been shut-down by the host. Also inhibits the EIF2S1/eIF2alpha-ATF4-DDIT3/CHOP pathway. This chain is Protein DP71L, found in African swine fever virus (strain Badajoz 1971 Vero-adapted) (Ba71V).